A 571-amino-acid chain; its full sequence is Hemagglutinin-neuraminidase (571 aa).

At 1 to 25 the chain is on the intravirion side; it reads MEDYSNLSLKSIPKRTCRIIFRTAT. The helical transmembrane segment at 26–46 threads the bilayer; it reads ILGICTLIVLCSSILHEIIHL. The Virion surface portion of the chain corresponds to 47–571; sequence DVSSGLMDSD…IIPFLRELIP (525 aa). Disulfide bonds link Cys166-Cys190, Cys180-Cys241, and Cys232-Cys245. The segment at 228–233 is important for neuraminidase activity; the sequence is NRKSCS. Positions 228 to 233 are involved in neuraminidase activity; sequence NRKSCS. N-linked (GlcNAc...) asparagine; by host glycans are attached at residues Asn272, Asn284, Asn335, and Asn341. Cystine bridges form between Cys338-Cys459, Cys370-Cys380, and Cys453-Cys463. Asn386 carries N-linked (GlcNAc...) asparagine; by host glycosylation. The tract at residues 393 to 398 is sialic receptor-binding site; the sequence is GAEGRL. N-linked (GlcNAc...) asparagine; by host glycosylation is found at Asn454, Asn498, Asn501, Asn517, and Asn522. Cysteines 535 and 546 form a disulfide.

The protein belongs to the paramyxoviruses hemagglutinin-neuraminidase family. As to quaternary structure, homotetramer; composed of disulfide-linked homodimers. Interacts with F protein trimer.

Its subcellular location is the virion membrane. The protein resides in the host cell membrane. It carries out the reaction Hydrolysis of alpha-(2-&gt;3)-, alpha-(2-&gt;6)-, alpha-(2-&gt;8)- glycosidic linkages of terminal sialic acid residues in oligosaccharides, glycoproteins, glycolipids, colominic acid and synthetic substrates.. Functionally, attaches the virus to sialic acid-containing cell receptors and thereby initiating infection. Binding of HN protein to the receptor induces a conformational change that allows the F protein to trigger virion/cell membranes fusion. Its function is as follows. Neuraminidase activity ensures the efficient spread of the virus by dissociating the mature virions from the neuraminic acid containing glycoproteins. This is Hemagglutinin-neuraminidase (HN) from Human parainfluenza 2 virus (strain Toshiba) (HPIV-2).